A 473-amino-acid polypeptide reads, in one-letter code: Lysophospholipid acyltransferase 5 (473 aa).

Transmembrane regions (helical) follow at residues 20–40 (LLISVLAGYPLAVVHRTFFYN), 43–63 (AQHQHLFFVIVGLSLWMFNCG), 66–86 (VIHPILSIFGAFFITNFMAGT), and 88–108 (ASIYAAHIVFLGHLLIGYWFH). Active-site residues include asparagine 315 and histidine 351. 3 helical membrane-spanning segments follow: residues 341-361 (VITLSYLAIWHGYHLGYFLLF), 396-416 (FIWIFGKLTISYSMGFAFLMF), and 431-451 (LYFIGFIIYFIVWPILHMVLL). The Di-lysine motif motif lies at 470-473 (KKEL).

Belongs to the membrane-bound acyltransferase family.

It localises to the endoplasmic reticulum membrane. It catalyses the reaction a 1-acyl-sn-glycero-3-phosphocholine + an acyl-CoA = a 1,2-diacyl-sn-glycero-3-phosphocholine + CoA. The enzyme catalyses a 1-acyl-sn-glycero-3-phospho-L-serine + an acyl-CoA = a 1,2-diacyl-sn-glycero-3-phospho-L-serine + CoA. It carries out the reaction a 1-acyl-sn-glycero-3-phosphoethanolamine + an acyl-CoA = a 1,2-diacyl-sn-glycero-3-phosphoethanolamine + CoA. It participates in lipid metabolism; phospholipid metabolism. Functionally, probable acyltransferase which may mediate the conversion of lysophosphatidylcholine (1-acyl-sn-glycero-3-phosphocholine or LPC) into phosphatidylcholine (1,2-diacyl-sn-glycero-3-phosphocholine or PC) (LPCAT activity). May also catalyze the conversion of lysophosphatidylethanolamine (1-acyl-2-hydroxy-sn-glycero-3-phosphoethanolamine or LPE) into phosphatidylethanolamine (1,2-diacyl-sn-glycero-3-phosphoethanolamine or PE) (LPEAT activity), as well as the conversion of lysophosphatidylserine (1-acyl-2-hydroxy-sn-glycero-3-phospho-L-serine or LPS) into phosphatidylserine (1,2-diacyl-sn-glycero-3-phospho-L-serine or PS) (LPSAT activity). Required for incorporation of arachidonic acid into PC, PE, and PS. The sequence is that of Lysophospholipid acyltransferase 5 (mboa-6) from Caenorhabditis elegans.